We begin with the raw amino-acid sequence, 645 residues long: 1,4-alpha-glucan branching enzyme GlgB (645 aa).

D309 (nucleophile) is an active-site residue. Catalysis depends on E352, which acts as the Proton donor. The interval 621–645 is disordered; sequence MRKGSKKQDGKKAELRSNATSRRKR. The span at 626–635 shows a compositional bias: basic and acidic residues; it reads KKQDGKKAEL.

It belongs to the glycosyl hydrolase 13 family. GlgB subfamily. Monomer.

It carries out the reaction Transfers a segment of a (1-&gt;4)-alpha-D-glucan chain to a primary hydroxy group in a similar glucan chain.. It functions in the pathway glycan biosynthesis; glycogen biosynthesis. Its function is as follows. Catalyzes the formation of the alpha-1,6-glucosidic linkages in glycogen by scission of a 1,4-alpha-linked oligosaccharide from growing alpha-1,4-glucan chains and the subsequent attachment of the oligosaccharide to the alpha-1,6 position. The sequence is that of 1,4-alpha-glucan branching enzyme GlgB from Bacillus cytotoxicus (strain DSM 22905 / CIP 110041 / 391-98 / NVH 391-98).